The sequence spans 259 residues: Protein SODIUM POTASSIUM ROOT DEFECTIVE 2 (259 aa).

A disordered region spans residues 141–165 (PDSITGSVDQDPAKTVEAEAPAGED). The span at 151–165 (DPAKTVEAEAPAGED) shows a compositional bias: basic and acidic residues. Residues 180-246 (QQVVVLKVSL…KVKNAQFWTN (67 aa)) form the HMA domain. 2 residues coordinate a metal cation: cysteine 191 and cysteine 194.

In Arabidopsis thaliana (Mouse-ear cress), this protein is Protein SODIUM POTASSIUM ROOT DEFECTIVE 2.